The primary structure comprises 465 residues: Casein kinase 1-like protein 2 (465 aa).

The region spanning 9 to 277 (FRLGRKIGGG…LKRLFRDLFI (269 aa)) is the Protein kinase domain. ATP contacts are provided by residues 15 to 23 (IGGGSFGEI) and K38. D128 (proton acceptor) is an active-site residue. Disordered stretches follow at residues 300–344 (STPP…GIPR) and 396–428 (REAAVLGTDSEPSNPQIVEAGSGSNSKIPVSRN). A compositionally biased stretch (polar residues) spans 405–428 (SEPSNPQIVEAGSGSNSKIPVSRN).

Belongs to the protein kinase superfamily. CK1 Ser/Thr protein kinase family. Casein kinase I subfamily. In terms of assembly, monomer. Autophosphorylated.

The protein localises to the cytoplasm. It localises to the nucleus. The enzyme catalyses L-seryl-[protein] + ATP = O-phospho-L-seryl-[protein] + ADP + H(+). It carries out the reaction L-threonyl-[protein] + ATP = O-phospho-L-threonyl-[protein] + ADP + H(+). Casein kinases are operationally defined by their preferential utilization of acidic proteins such as caseins as substrates. It can phosphorylate a large number of proteins. In Arabidopsis thaliana (Mouse-ear cress), this protein is Casein kinase 1-like protein 2.